We begin with the raw amino-acid sequence, 43 residues long: MESTLSLVVAIAAITICITAFAIYTAFGPPSKNLQDPYEMHED.

Residues 7-27 (LVVAIAAITICITAFAIYTAF) traverse the membrane as a helical segment.

The protein belongs to the PsbN family.

Its subcellular location is the cellular thylakoid membrane. Its function is as follows. May play a role in photosystem I and II biogenesis. The chain is Protein PsbN from Synechococcus sp. (strain JA-3-3Ab) (Cyanobacteria bacterium Yellowstone A-Prime).